The following is a 930-amino-acid chain: Dual serine/threonine and tyrosine protein kinase (930 aa).

The span at 1 to 14 (MEGDGVPWGSEPVS) shows a compositional bias: low complexity. Residues 1–22 (MEGDGVPWGSEPVSGPGPGGGG) form a disordered region. Coiled-coil stretches lie at residues 190-216 (EEDL…MHHA) and 396-432 (RKKE…KEEL). In terms of domain architecture, Protein kinase spans 653–907 (PKLGQELGRG…PLLGIVQPML (255 aa)). ATP-binding positions include 659 to 667 (LGRGQYGVV) and Lys682. Asp778 functions as the Proton acceptor in the catalytic mechanism.

It belongs to the protein kinase superfamily. Ser/Thr protein kinase family.

It localises to the cytoplasm. It is found in the cell membrane. The protein resides in the apical cell membrane. Its subcellular location is the basolateral cell membrane. The protein localises to the cell junction. It carries out the reaction L-seryl-[protein] + ATP = O-phospho-L-seryl-[protein] + ADP + H(+). The enzyme catalyses L-threonyl-[protein] + ATP = O-phospho-L-threonyl-[protein] + ADP + H(+). The catalysed reaction is L-tyrosyl-[protein] + ATP = O-phospho-L-tyrosyl-[protein] + ADP + H(+). Acts as a positive regulator of ERK phosphorylation downstream of fibroblast growth factor-receptor activation. Involved in the regulation of both caspase-dependent apoptosis and caspase-independent cell death. In the skin, it plays a predominant role in suppressing caspase-dependent apoptosis in response to UV stress in a range of dermal cell types. The sequence is that of Dual serine/threonine and tyrosine protein kinase (DSTYK) from Pan troglodytes (Chimpanzee).